The primary structure comprises 219 residues: Ribose-5-phosphate isomerase A (219 aa).

Residues 28–31, 81–84, and 94–97 contribute to the substrate site; these read SGST, DGAD, and KGGG. The Proton acceptor role is filled by Glu-103. Lys-121 is a substrate binding site.

The protein belongs to the ribose 5-phosphate isomerase family. Homodimer.

It carries out the reaction aldehydo-D-ribose 5-phosphate = D-ribulose 5-phosphate. It participates in carbohydrate degradation; pentose phosphate pathway; D-ribose 5-phosphate from D-ribulose 5-phosphate (non-oxidative stage): step 1/1. In terms of biological role, catalyzes the reversible conversion of ribose-5-phosphate to ribulose 5-phosphate. This is Ribose-5-phosphate isomerase A from Haemophilus influenzae (strain ATCC 51907 / DSM 11121 / KW20 / Rd).